Reading from the N-terminus, the 267-residue chain is Undecaprenyl-diphosphatase (267 aa).

7 helical membrane-spanning segments follow: residues 4-24 (LYAL…ISST), 41-61 (FWKS…IFVF), 69-89 (LDIW…GLFV), 96-116 (LFNG…FILI), 173-193 (AAEF…AYSI), 207-227 (IPLG…IKFF), and 239-259 (FGIY…SGIL).

It belongs to the UppP family.

The protein localises to the cell inner membrane. The enzyme catalyses di-trans,octa-cis-undecaprenyl diphosphate + H2O = di-trans,octa-cis-undecaprenyl phosphate + phosphate + H(+). Its function is as follows. Catalyzes the dephosphorylation of undecaprenyl diphosphate (UPP). Confers resistance to bacitracin. This Campylobacter jejuni subsp. jejuni serotype O:2 (strain ATCC 700819 / NCTC 11168) protein is Undecaprenyl-diphosphatase.